The following is a 901-amino-acid chain: HTH-type transcriptional regulator MalT (901 aa).

39 to 46 (SPAGYGKT) is a binding site for ATP. The HTH luxR-type domain occupies 829–894 (ELIRTSPLTQ…DAVQHAQQLL (66 aa)). Residues 853–872 (NEQIAGELAVAATTIKTHIR) constitute a DNA-binding region (H-T-H motif).

The protein belongs to the MalT family. In terms of assembly, monomer in solution. Oligomerizes to an active state in the presence of the positive effectors ATP and maltotriose.

Its activity is regulated as follows. Activated by ATP and maltotriose, which are both required for DNA binding. In terms of biological role, positively regulates the transcription of the maltose regulon whose gene products are responsible for uptake and catabolism of malto-oligosaccharides. Specifically binds to the promoter region of its target genes, recognizing a short DNA motif called the MalT box. The chain is HTH-type transcriptional regulator MalT from Salmonella heidelberg (strain SL476).